A 360-amino-acid polypeptide reads, in one-letter code: UDP-N-acetylglucosamine--N-acetylmuramyl-(pentapeptide) pyrophosphoryl-undecaprenol N-acetylglucosamine transferase (360 aa).

UDP-N-acetyl-alpha-D-glucosamine contacts are provided by serine 198 and glutamine 289.

This sequence belongs to the glycosyltransferase 28 family. MurG subfamily.

The protein localises to the cell membrane. The catalysed reaction is Mur2Ac(oyl-L-Ala-gamma-D-Glu-L-Lys-D-Ala-D-Ala)-di-trans,octa-cis-undecaprenyl diphosphate + UDP-N-acetyl-alpha-D-glucosamine = beta-D-GlcNAc-(1-&gt;4)-Mur2Ac(oyl-L-Ala-gamma-D-Glu-L-Lys-D-Ala-D-Ala)-di-trans,octa-cis-undecaprenyl diphosphate + UDP + H(+). The protein operates within cell wall biogenesis; peptidoglycan biosynthesis. Cell wall formation. Catalyzes the transfer of a GlcNAc subunit on undecaprenyl-pyrophosphoryl-MurNAc-pentapeptide (lipid intermediate I) to form undecaprenyl-pyrophosphoryl-MurNAc-(pentapeptide)GlcNAc (lipid intermediate II). This is UDP-N-acetylglucosamine--N-acetylmuramyl-(pentapeptide) pyrophosphoryl-undecaprenol N-acetylglucosamine transferase from Streptococcus pyogenes serotype M18 (strain MGAS8232).